The chain runs to 1213 residues: DNA-directed RNA polymerase subunit beta' (1213 aa).

Zn(2+)-binding residues include C60, C62, C75, and C78. 3 residues coordinate Mg(2+): D450, D452, and D454. Zn(2+)-binding residues include C819, C893, C900, and C903.

This sequence belongs to the RNA polymerase beta' chain family. The RNAP catalytic core consists of 2 alpha, 1 beta, 1 beta' and 1 omega subunit. When a sigma factor is associated with the core the holoenzyme is formed, which can initiate transcription. The cofactor is Mg(2+). Zn(2+) serves as cofactor.

It catalyses the reaction RNA(n) + a ribonucleoside 5'-triphosphate = RNA(n+1) + diphosphate. Functionally, DNA-dependent RNA polymerase catalyzes the transcription of DNA into RNA using the four ribonucleoside triphosphates as substrates. The polypeptide is DNA-directed RNA polymerase subunit beta' (Streptococcus pyogenes serotype M2 (strain MGAS10270)).